We begin with the raw amino-acid sequence, 1735 residues long: Inactive tyrosine-protein kinase PEAK1 (1735 aa).

2 disordered regions span residues 26 to 66 (LHQL…PPVA) and 111 to 145 (LSQKPLNNNSEGDAEGFGSDPQQCANNDSAQKISN). Composition is skewed to polar residues over residues 111-121 (LSQKPLNNNSE) and 130-145 (DPQQCANNDSAQKISN). Residue serine 282 is modified to Phosphoserine. Disordered stretches follow at residues 324–410 (NSGV…SVKV), 491–514 (GRPKIKGSSSTPNSPVTSPALTPG), and 537–580 (SPRQ…SKTI). Residues 325–336 (SGVSYGQGSVQS) show a composition bias toward low complexity. A compositionally biased stretch (polar residues) spans 337–365 (TISSDCTSPGSSFTEESRSETASSLSQKV). Low complexity predominate over residues 367-378 (NGGISPGNPGNS). Polar residues predominate over residues 384–393 (TESNFESPPG). Residues 498–509 (SSSTPNSPVTSP) show a composition bias toward low complexity. Serine 537, serine 569, and serine 584 each carry phosphoserine. The span at 566–580 (APTSPTATNISSKTI) shows a compositional bias: polar residues. Phosphotyrosine is present on residues tyrosine 632 and tyrosine 638. Phosphoserine is present on serine 645. At tyrosine 662 the chain carries Phosphotyrosine. 3 disordered regions span residues 663–762 (EEIE…REKA), 800–919 (PDAD…AADA), and 1019–1097 (RNSE…SATY). Polar residues-rich tracts occupy residues 704 to 735 (QEFNNCLNRGQSSPQRSYSSTHSSPAKIQRPT), 745 to 757 (AQGSQVPGSSSNS), and 819 to 839 (LFTSQSSGEGEAHQTTESPTA). A phosphoserine mark is found at serine 824 and serine 825. Residues 847 to 863 (TKPVTSPPSKLVTSAQS) are compositionally biased toward low complexity. A compositionally biased stretch (pro residues) spans 864–873 (EPPPPFPPPR). The span at 879–901 (YHASNLLQRHFTNWTKPTSPTRS) shows a compositional bias: polar residues. Serine 897 carries the phosphoserine modification. Basic and acidic residues-rich tracts occupy residues 902-919 (TEAESILHSEGSRRAADA) and 1037-1055 (ACSRVTHEVAGELSPRDPR). The segment covering 1076–1086 (EREEEKDDTLD) has biased composition (acidic residues). Threonine 1141 is modified (phosphothreonine). Tyrosine 1177 is modified (phosphotyrosine). Residues 1274–1300 (EVVGKLRSLHTDALKRLAVKCEDLFMA) form a required for homodimerization region. The Protein kinase domain occupies 1302 to 1664 (QKDQLRFGVD…LLWGPREDLF (363 aa)). A Phosphoserine modification is found at serine 1363. Residues 1394-1445 (WEDPDAPEKAEDGTEDSEEEGKAETLGGNPEPCSETEPSQKENQRVTNRKQR) form a disordered region. The required for homodimerization stretch occupies residues 1659-1732 (PREDLFQIFT…DSLSYIVKIL (74 aa)).

Belongs to the protein kinase superfamily. In terms of assembly, homodimer. Interacts with BCAR1 and CRK. Interacts with PRAG1. Interacts (when phosphorylated at Tyr-1177) with SHC1 (via PID domain). Found in a complex with PPP1CA, PPP1CC and SHC1. Interacts (when phosphorylated at Tyr-632) with tensin TNS3 (when phosphorylated on the SH2 domain); TNS3 also interacts with integrins ITGB1, ITGB3 and ITGB5 and mediates their association with PEAK1. In terms of processing, phosphorylated on tyrosine in a CSK-dependent manner in response to adhesion to fibronectin and to EGF stimulation. Phosphorylation at Tyr-662 by a Src family kinase controls subcellular localization to focal adhesion and focal adhesion dynamics. Phosphorylation at Tyr-1177 is essential for binding to SHC1. Phosphorylation at Tyr-632 promotes interaction with tensin TNS3.

Its subcellular location is the cytoplasm. It localises to the cytoskeleton. It is found in the cell junction. The protein localises to the focal adhesion. Its function is as follows. Probable catalytically inactive kinase. Scaffolding protein that regulates the cytoskeleton to control cell spreading and migration by modulating focal adhesion dynamics. Acts as a scaffold for mediating EGFR signaling. This chain is Inactive tyrosine-protein kinase PEAK1 (Peak1), found in Mus musculus (Mouse).